The primary structure comprises 319 residues: 4-hydroxy-3-methylbut-2-enyl diphosphate reductase (319 aa).

Cys-18 is a [4Fe-4S] cluster binding site. Residues His-47 and His-81 each contribute to the (2E)-4-hydroxy-3-methylbut-2-enyl diphosphate site. Positions 47 and 81 each coordinate dimethylallyl diphosphate. His-47 and His-81 together coordinate isopentenyl diphosphate. Cys-103 lines the [4Fe-4S] cluster pocket. His-131 is a (2E)-4-hydroxy-3-methylbut-2-enyl diphosphate binding site. His-131 contributes to the dimethylallyl diphosphate binding site. Residue His-131 coordinates isopentenyl diphosphate. The active-site Proton donor is Glu-133. Thr-172 is a binding site for (2E)-4-hydroxy-3-methylbut-2-enyl diphosphate. Cys-202 serves as a coordination point for [4Fe-4S] cluster. Residues Ser-230, Ser-231, Asn-232, and Ser-275 each contribute to the (2E)-4-hydroxy-3-methylbut-2-enyl diphosphate site. Dimethylallyl diphosphate is bound by residues Ser-230, Ser-231, Asn-232, and Ser-275. Isopentenyl diphosphate is bound by residues Ser-230, Ser-231, Asn-232, and Ser-275.

This sequence belongs to the IspH family. The cofactor is [4Fe-4S] cluster.

It catalyses the reaction isopentenyl diphosphate + 2 oxidized [2Fe-2S]-[ferredoxin] + H2O = (2E)-4-hydroxy-3-methylbut-2-enyl diphosphate + 2 reduced [2Fe-2S]-[ferredoxin] + 2 H(+). It carries out the reaction dimethylallyl diphosphate + 2 oxidized [2Fe-2S]-[ferredoxin] + H2O = (2E)-4-hydroxy-3-methylbut-2-enyl diphosphate + 2 reduced [2Fe-2S]-[ferredoxin] + 2 H(+). Its pathway is isoprenoid biosynthesis; dimethylallyl diphosphate biosynthesis; dimethylallyl diphosphate from (2E)-4-hydroxy-3-methylbutenyl diphosphate: step 1/1. The protein operates within isoprenoid biosynthesis; isopentenyl diphosphate biosynthesis via DXP pathway; isopentenyl diphosphate from 1-deoxy-D-xylulose 5-phosphate: step 6/6. Its function is as follows. Catalyzes the conversion of 1-hydroxy-2-methyl-2-(E)-butenyl 4-diphosphate (HMBPP) into a mixture of isopentenyl diphosphate (IPP) and dimethylallyl diphosphate (DMAPP). Acts in the terminal step of the DOXP/MEP pathway for isoprenoid precursor biosynthesis. In Methylocella silvestris (strain DSM 15510 / CIP 108128 / LMG 27833 / NCIMB 13906 / BL2), this protein is 4-hydroxy-3-methylbut-2-enyl diphosphate reductase.